The sequence spans 314 residues: Ribonuclease Z (314 aa).

The Zn(2+) site is built by His-62, His-64, Asp-66, His-67, His-144, Asp-215, and His-273. The active-site Proton acceptor is Asp-66.

Belongs to the RNase Z family. In terms of assembly, homodimer. It depends on Zn(2+) as a cofactor.

The catalysed reaction is Endonucleolytic cleavage of RNA, removing extra 3' nucleotides from tRNA precursor, generating 3' termini of tRNAs. A 3'-hydroxy group is left at the tRNA terminus and a 5'-phosphoryl group is left at the trailer molecule.. Its function is as follows. Zinc phosphodiesterase, which displays some tRNA 3'-processing endonuclease activity. Probably involved in tRNA maturation, by removing a 3'-trailer from precursor tRNA. The chain is Ribonuclease Z from Prochlorococcus marinus (strain NATL1A).